A 1183-amino-acid chain; its full sequence is 3-hydroxy-3-methylglutaryl-coenzyme A reductase (1183 aa).

Residues 1-245 are Cytoplasmic-facing; sequence MAAILLPQRF…DLLKNAETLD (245 aa). The SSD domain occupies 245 to 426; the sequence is DIVIMLLGYI…FTFYTAILSI (182 aa). A helical membrane pass occupies residues 246–266; that stretch reads IVIMLLGYIAMHLTFVSLFLS. Residues 267–273 are Lumenal-facing; it reads MRKMGSK. Residues 274-294 form a helical membrane-spanning segment; sequence FWLGICTLFSSVFAFLFGLVV. The Cytoplasmic segment spans residues 295-299; the sequence is TTKLG. A helical membrane pass occupies residues 300–320; that stretch reads VPISVILLSEGLPFLVVTIGF. Residues 321–378 are Lumenal-facing; that stretch reads EKNIVLTRAVMSHAIEHRRIQAQNSKSGKRSPERSTQNMIQYAVQAAIKEKGFEIIRD. Residues 379–399 traverse the membrane as a helical segment; the sequence is YAIEIVILVIGAASGVQGGLQ. At 400-402 the chain is on the cytoplasmic side; sequence QFC. The helical transmembrane segment at 403–423 threads the bilayer; sequence FLAAWTLFFDFILLFTFYTAI. Over 424 to 482 the chain is Lumenal; it reads LSIKLEINRIKRHVDMRMALEDDGVSRRVAENVAKGDDELNRVRGDAPLFGRKSSSIPK. Residues 483–503 traverse the membrane as a helical segment; sequence FKVLMILGFIFVNIVNICSIP. Residues 504-1183 lie on the Cytoplasmic side of the membrane; that stretch reads FRNPSSMSTI…SAAAIQRSKR (680 aa). E828 (charge relay system) is an active-site residue. CoA is bound at residue 834–840; the sequence is SASRGCK. NADP(+)-binding positions include 895 to 897 and 922 to 930; these read SRF and DAMGMNMIS. K962 serves as the catalytic Charge relay system. 991–993 serves as a coordination point for CoA; the sequence is VLK. D1038 serves as the catalytic Charge relay system. 1133 to 1134 is a CoA binding site; the sequence is AH. H1134 serves as the catalytic Proton donor. A disordered region spans residues 1136 to 1183; the sequence is QHNRSAAPSRSTTPAPPMTPVSLAMTSAQERSASTTSMSAAAIQRSKR. Position 1138 to 1139 (1138 to 1139) interacts with NADP(+); the sequence is NR. Composition is skewed to low complexity over residues 1139–1148 and 1167–1177; these read RSAAPSRSTT and SASTTSMSAAA.

This sequence belongs to the HMG-CoA reductase family.

Its subcellular location is the endoplasmic reticulum membrane. It carries out the reaction (R)-mevalonate + 2 NADP(+) + CoA = (3S)-3-hydroxy-3-methylglutaryl-CoA + 2 NADPH + 2 H(+). It participates in metabolic intermediate biosynthesis; (R)-mevalonate biosynthesis; (R)-mevalonate from acetyl-CoA: step 3/3. In terms of biological role, HMG-CoA reductase; part of the first module of ergosterol biosynthesis pathway that includes the early steps of the pathway, conserved across all eukaryotes, and which results in the formation of mevalonate from acetyl-coenzyme A (acetyl-CoA). In this module, the cytosolic acetyl-CoA acetyltransferase catalyzes the formation of acetoacetyl-CoA. The hydroxymethylglutaryl-CoA synthase then condenses acetyl-CoA with acetoacetyl-CoA to form HMG-CoA. The rate-limiting step of the early module is the reduction to mevalonate by the 3-hydroxy-3-methylglutaryl-coenzyme A (HMG-CoA) reductase HMGR. The polypeptide is 3-hydroxy-3-methylglutaryl-coenzyme A reductase (HMGR) (Gibberella fujikuroi (strain CBS 195.34 / IMI 58289 / NRRL A-6831) (Bakanae and foot rot disease fungus)).